The chain runs to 485 residues: Subtilisin-like protease 1 (485 aa).

The first 19 residues, 1–19 (MGIFRFISISLAAVSAANA), serve as a signal peptide directing secretion. Positions 20–116 (GHILSMGHAK…VEPDTTITIH (97 aa)) are excised as a propeptide. The 83-residue stretch at 34-116 (SYIVVMKDGT…VEPDTTITIH (83 aa)) folds into the Inhibitor I9 domain. One can recognise a Peptidase S8 domain in the interval 126-400 (SWGLARISSQ…NILINNGDAK (275 aa)). Residues D158 and H190 each act as charge relay system in the active site. An N-linked (GlcNAc...) asparagine glycan is attached at N251. S345 (charge relay system) is an active-site residue. Over residues 377–394 (GTSSVTNPGPGTRTNILI) the composition is skewed to polar residues. Residues 377–462 (GTSSVTNPGP…HTPFPNDDFN (86 aa)) form a disordered region. Residues 409-418 (PSQPPKPSQP) show a composition bias toward pro residues. The segment covering 419 to 428 (SKPQQPSEPQ) has biased composition (low complexity). Residues 433-455 (PQEPAPGQPAPAPAPVPQHPHTP) are compositionally biased toward pro residues.

This sequence belongs to the peptidase S8 family.

It localises to the secreted. Functionally, secreted subtilisin-like serine protease with keratinolytic activity that contributes to pathogenicity. This is Subtilisin-like protease 1 (SUB1) from Arthroderma otae (strain ATCC MYA-4605 / CBS 113480) (Microsporum canis).